We begin with the raw amino-acid sequence, 406 residues long: 4-hydroxy-3-methylbut-2-en-1-yl diphosphate synthase (ferredoxin) (406 aa).

The [4Fe-4S] cluster site is built by cysteine 315, cysteine 318, cysteine 349, and glutamate 356.

Belongs to the IspG family. Requires [4Fe-4S] cluster as cofactor.

It carries out the reaction (2E)-4-hydroxy-3-methylbut-2-enyl diphosphate + 2 oxidized [2Fe-2S]-[ferredoxin] + H2O = 2-C-methyl-D-erythritol 2,4-cyclic diphosphate + 2 reduced [2Fe-2S]-[ferredoxin] + H(+). It functions in the pathway isoprenoid biosynthesis; isopentenyl diphosphate biosynthesis via DXP pathway; isopentenyl diphosphate from 1-deoxy-D-xylulose 5-phosphate: step 5/6. Converts 2C-methyl-D-erythritol 2,4-cyclodiphosphate (ME-2,4cPP) into 1-hydroxy-2-methyl-2-(E)-butenyl 4-diphosphate. In Rippkaea orientalis (strain PCC 8801 / RF-1) (Cyanothece sp. (strain PCC 8801)), this protein is 4-hydroxy-3-methylbut-2-en-1-yl diphosphate synthase (ferredoxin).